The following is a 195-amino-acid chain: Thioredoxin reductase-like selenoprotein T (195 aa).

The first 19 residues, 1–19 (MRLLLLLLVAASAVVRSDA), serve as a signal peptide directing secretion. The segment at residues 46–49 (CVSU) is a cross-link (cysteinyl-selenocysteine (Cys-Sec)). Residue Sec-49 is a non-standard amino acid, selenocysteine. The chain crosses the membrane as a helical span at residues 85-103 (IASFLSVFKLVLIGLIIVG).

It belongs to the SelWTH family. Selenoprotein T subfamily. Post-translationally, may contain a selenide-sulfide bond between Cys-46 and Sec-49. This bond is speculated to serve as redox-active pair.

It is found in the endoplasmic reticulum membrane. The enzyme catalyses [thioredoxin]-dithiol + NADP(+) = [thioredoxin]-disulfide + NADPH + H(+). Selenoprotein with thioredoxin reductase-like oxidoreductase activity. Protects dopaminergic neurons against oxidative stress and cell death. Involved in ADCYAP1/PACAP-induced calcium mobilization and neuroendocrine secretion. Plays a role in fibroblast anchorage and redox regulation. In gastric smooth muscle, modulates the contraction processes through the regulation of calcium release and MYLK activation. In pancreatic islets, involved in the control of glucose homeostasis, contributes to prolonged ADCYAP1/PACAP-induced insulin secretion. In Bos taurus (Bovine), this protein is Thioredoxin reductase-like selenoprotein T.